A 105-amino-acid chain; its full sequence is MAESPFKADIERAQKELTEKMTPGAIAYIPGSSVINKTGSWRVFKPEFHKDKCVRCFLCYIYCPEPAIYLDEEGYPVFDYDYCKGCGICANECPTKAIEMVREVK.

4Fe-4S ferredoxin-type domains are found at residues 44-73 and 74-103; these read FKPEFHKDKCVRCFLCYIYCPEPAIYLDEE and GYPVFDYDYCKGCGICANECPTKAIEMVRE. [4Fe-4S] cluster-binding residues include cysteine 53, cysteine 56, cysteine 59, cysteine 63, cysteine 83, cysteine 86, cysteine 89, and cysteine 93.

In terms of assembly, heterotetramer of one alpha, one beta, one delta and one gamma chain. [4Fe-4S] cluster serves as cofactor.

This chain is Pyruvate synthase subunit PorD (porD), found in Pyrococcus horikoshii (strain ATCC 700860 / DSM 12428 / JCM 9974 / NBRC 100139 / OT-3).